The sequence spans 397 residues: Purine ribonucleoside efflux pump NepI (397 aa).

Residues 1–21 (MNENIAEKFRADGVARPNWSA) lie on the Cytoplasmic side of the membrane. The helical transmembrane segment at 22-42 (VFAVAFCVACLITVEFLPVSL) threads the bilayer. Residues 43–54 (LTPMAQDLGISE) are Periplasmic-facing. Residues 55 to 75 (GIAGQSVTVTAFVAMFSSLFI) form a helical membrane-spanning segment. The Cytoplasmic portion of the chain corresponds to 76 to 85 (TQIIQATDRR). Residues 86–106 (YIVILFAVLLTASCLMVSFAN) traverse the membrane as a helical segment. Position 107 (S107) is a topological domain, periplasmic. Residues 108-128 (FTLLLLGRACLGLALGGFWAM) traverse the membrane as a helical segment. At 129 to 147 (SASLTMRLVPARTVPKALS) the chain is on the cytoplasmic side. The chain crosses the membrane as a helical span at residues 148-168 (VIFGAVSIALVIAAPLGSFLG). Topologically, residues 169–175 (GIIGWRN) are periplasmic. Residues 176–196 (VFNAAAVMGVLCVIWVVKSLP) form a helical membrane-spanning segment. At 197–215 (SLPGEPSHQKQNMFSLLQR) the chain is on the cytoplasmic side. Residues 216 to 236 (PGVMAGMIAIFMSFAGQFAFF) form a helical membrane-spanning segment. Residues 237–255 (TYIRPVYMNLAGFDVDGLT) lie on the Periplasmic side of the membrane. Residues 256–276 (LVLLSFGIASFVGTSFSSYVL) form a helical membrane-spanning segment. The Cytoplasmic segment spans residues 277–281 (KRSVK). Residues 282-302 (LALAGAPLLLALSALTLIVWG) traverse the membrane as a helical segment. The Periplasmic segment spans residues 303–305 (SDK). A helical membrane pass occupies residues 306–326 (TVAAVIAIIWGLAFALVPVGW). The Cytoplasmic portion of the chain corresponds to 327-343 (STWITRSLADQAEKAGS). Residues 344–364 (IQVAVIQLANTCGAAVGGYAL) form a helical membrane-spanning segment. Topologically, residues 365–366 (DN) are periplasmic. Residues 367 to 387 (FGLLSPLALSGCLMLLTALVV) traverse the membrane as a helical segment. Residues 388–397 (AAKVRITPMS) lie on the Cytoplasmic side of the membrane.

Belongs to the major facilitator superfamily. DHA1 family. NepI (TC 2.A.1.2.26) subfamily.

It localises to the cell inner membrane. It carries out the reaction inosine(in) + H(+)(out) = inosine(out) + H(+)(in). It catalyses the reaction guanosine(in) + H(+)(out) = guanosine(out) + H(+)(in). Involved in the efflux of purine ribonucleosides, such as inosine and guanosine. In Salmonella enteritidis PT4 (strain P125109), this protein is Purine ribonucleoside efflux pump NepI.